The sequence spans 485 residues: Hexokinase (485 aa).

Serine 15 carries the phosphoserine modification. The region spanning 21-468 (ANLMEQIHGL…SGVGAAIIAC (448 aa)) is the Hexokinase domain. Residues 75–208 (TGKETGDFLA…NIPINVVALI (134 aa)) are hexokinase small subdomain. Lysine 111 is a binding site for ATP. Residues 151 to 177 (PLGFTFSYPASQKKINSGVLQRWTKGF) are glucose-binding. The segment at 209–457 (NDTTGTLVAS…HPIQLVAAED (249 aa)) is hexokinase large subdomain.

In terms of assembly, monomer and homodimer. The monomeric form is active, the homodimeric form inactive.

It carries out the reaction a D-hexose + ATP = a D-hexose 6-phosphate + ADP + H(+). It catalyses the reaction D-fructose + ATP = D-fructose 6-phosphate + ADP + H(+). The enzyme catalyses D-glucose + ATP = D-glucose 6-phosphate + ADP + H(+). It participates in carbohydrate metabolism; hexose metabolism. It functions in the pathway carbohydrate degradation; glycolysis; D-glyceraldehyde 3-phosphate and glycerone phosphate from D-glucose: step 1/4. Catalyzes the phosphorylation of hexose, such as D-glucose and D-fructose, to hexose 6-phosphate (D-glucose 6-phosphate and D-fructose 6-phosphate, respectively). Has higher affinity for D-glucose. Mediates the initial step of glycolysis by catalyzing phosphorylation of D-glucose to D-glucose 6-phosphate. The protein is Hexokinase (RAG5) of Kluyveromyces lactis (strain ATCC 8585 / CBS 2359 / DSM 70799 / NBRC 1267 / NRRL Y-1140 / WM37) (Yeast).